A 92-amino-acid chain; its full sequence is Small ribosomal subunit protein uS19 (92 aa).

Residues 72–92 (GEFSPTRSFRGHAGAKNKGKK) are disordered. The span at 80 to 92 (FRGHAGAKNKGKK) shows a compositional bias: basic residues.

The protein belongs to the universal ribosomal protein uS19 family.

Functionally, protein S19 forms a complex with S13 that binds strongly to the 16S ribosomal RNA. This is Small ribosomal subunit protein uS19 from Flavobacterium johnsoniae (strain ATCC 17061 / DSM 2064 / JCM 8514 / BCRC 14874 / CCUG 350202 / NBRC 14942 / NCIMB 11054 / UW101) (Cytophaga johnsonae).